Reading from the N-terminus, the 358-residue chain is Neutral protease 2 homolog MEP8 (358 aa).

The signal sequence occupies residues 1–19; that stretch reads MKLSSILLALAALVSPAFS. A propeptide spanning residues 20–179 is cleaved from the precursor; sequence YAISHLPRSE…EKAIKPVDKR (160 aa). 2 cysteine pairs are disulfide-bonded: Cys186-Cys256 and Cys263-Cys281. His305 serves as a coordination point for Zn(2+). The active site involves Glu306. Zn(2+) contacts are provided by His309 and Asp320.

Belongs to the peptidase M35 family. It depends on Zn(2+) as a cofactor.

It localises to the secreted. The enzyme catalyses Preferential cleavage of bonds with hydrophobic residues in P1'. Also 3-Asn-|-Gln-4 and 8-Gly-|-Ser-9 bonds in insulin B chain.. Its function is as follows. Secreted metalloproteinase that allows assimilation of proteinaceous substrates. Shows high activities on basic nuclear substrates such as histone and protamine. May be involved in virulence. The polypeptide is Neutral protease 2 homolog MEP8 (MEP8) (Coccidioides posadasii (strain C735) (Valley fever fungus)).